Consider the following 354-residue polypeptide: Replication factor C subunit 3 (354 aa).

41–48 (GPSGSGKK) provides a ligand contact to ATP.

It belongs to the activator 1 small subunits family. As to quaternary structure, heterotetramer of subunits RFC2, RFC3, RFC4 and RFC5 that can form a complex with RFC1.

The protein localises to the nucleus. In terms of biological role, may be involved in DNA replication and thus regulate cell proliferation. In Arabidopsis thaliana (Mouse-ear cress), this protein is Replication factor C subunit 3 (RFC3).